Reading from the N-terminus, the 1458-residue chain is DNA polymerase alpha catalytic subunit (1458 aa).

2 disordered regions span residues 1 to 25 (MSDS…RKEA) and 89 to 119 (DLED…SVSK). A compositionally biased stretch (basic and acidic residues) spans 15–25 (EKTEKSGRKEA). 2 DNA-binding regions span residues 650–715 (RINS…VHQI) and 1241–1373 (QFRA…ACSK). Residues Cys1280, Cys1283, Cys1307, Cys1312, Cys1345, Cys1350, Cys1368, and Cys1371 each coordinate Zn(2+). The segment at 1280–1310 (CPKCGTENIYDNVFDGSGLQIEPGLKRCSKP) adopts a CysA-type zinc-finger fold. A CysB motif motif is present at residues 1345–1371 (CEEKTCQNRTRRLPLSFSRNGPICQAC).

Belongs to the DNA polymerase type-B family. As to quaternary structure, the DNA polymerase alpha complex is composed of four subunits: the catalytic subunit POLA1, the regulatory subunit POLA2, and the small and the large primase subunits PRIM1 and PRIM2 respectively. Interacts with PARP1; this interaction functions as part of the control of replication fork progression. Interacts with MCM10 and WDHD1; these interactions recruit the polymerase alpha complex to the pre-replicative complex bound to DNA. Interacts with RPA1; this interaction stabilizes the replicative complex and reduces the misincorporation rate of DNA polymerase alpha by acting as a fidelity clamp.

It is found in the nucleus. The enzyme catalyses DNA(n) + a 2'-deoxyribonucleoside 5'-triphosphate = DNA(n+1) + diphosphate. Its function is as follows. Plays an essential role in the initiation of DNA replication. During the S phase of the cell cycle, the DNA polymerase alpha complex (composed of a catalytic subunit POLA1/p180, a regulatory subunit POLA2/p70 and two primase subunits PRIM1/p49 and PRIM2/p58) is recruited to DNA at the replicative forks via direct interactions with MCM10 and WDHD1. The primase subunit of the polymerase alpha complex initiates DNA synthesis by oligomerising short RNA primers on both leading and lagging strands. These primers are initially extended by the polymerase alpha catalytic subunit and subsequently transferred to polymerase delta and polymerase epsilon for processive synthesis on the lagging and leading strand, respectively. The reason this transfer occurs is because the polymerase alpha has limited processivity and lacks intrinsic 3' exonuclease activity for proofreading error, and therefore is not well suited for replicating long complexes. The sequence is that of DNA polymerase alpha catalytic subunit (pola1) from Xenopus laevis (African clawed frog).